The primary structure comprises 115 residues: DNA-binding protein Ta0052 (115 aa).

Positions methionine 1–arginine 41 are disordered. Residues leucine 15–glutamate 25 are compositionally biased toward low complexity. The segment covering glutamine 26–arginine 41 has biased composition (basic and acidic residues).

The protein belongs to the PDCD5 family.

This Thermoplasma acidophilum (strain ATCC 25905 / DSM 1728 / JCM 9062 / NBRC 15155 / AMRC-C165) protein is DNA-binding protein Ta0052.